Here is a 347-residue protein sequence, read N- to C-terminus: Protein RecA (347 aa).

67-74 (GPESSGKT) lines the ATP pocket.

This sequence belongs to the RecA family.

It localises to the cytoplasm. Its function is as follows. Can catalyze the hydrolysis of ATP in the presence of single-stranded DNA, the ATP-dependent uptake of single-stranded DNA by duplex DNA, and the ATP-dependent hybridization of homologous single-stranded DNAs. It interacts with LexA causing its activation and leading to its autocatalytic cleavage. The chain is Protein RecA from Helicobacter acinonychis (strain Sheeba).